The sequence spans 220 residues: MAAGTTTKERLERLINAKKQLEAQINRNGQILAANDNVGMSGPLVDAEGFPRNDIDVYQVRLARQTIICLQNDHKELMNQIQTLLNQYHSEIATTDPELVNRASALDLDSDRSPGGANITDLAPARAIVVVNLVSPDSPAERAGLCAGDAILRFGSINSGNFKGDLAQIGELVRNMQSQNVQLKVKRGEQQLDLILVPKTWSGRGLLGCNIVLPPEAMDH.

2 coiled-coil regions span residues 4-32 (GTTT…GQIL) and 61-91 (RLAR…YHSE). One can recognise a PDZ domain in the interval 102–200 (RASALDLDSD…QLDLILVPKT (99 aa)).

It belongs to the proteasome subunit p27 family. In terms of assembly, interacts with PI31; this interaction is increased by PI31 ADP-ribosylation. Interacts with Rpt5.

Its function is as follows. Acts as a chaperone during the assembly of the 26S proteasome, specifically of the base subcomplex of the PA700/19S regulatory complex (RC). This is 26S proteasome non-ATPase regulatory subunit 9 from Drosophila melanogaster (Fruit fly).